A 20-amino-acid polypeptide reads, in one-letter code: Collagenolytic protease 35 kDa 2 (20 aa).

One can recognise a Peptidase S1 domain in the interval 1–20; the sequence is IVGGTEVTPGEIPYQLSFQD. Residues 1 to 20 are disordered; that stretch reads IVGGTEVTPGEIPYQLSFQD.

This sequence belongs to the peptidase S1 family.

The catalysed reaction is Hydrolysis of proteins, with broad specificity for peptide bonds. Native collagen is cleaved about 75% of the length of the molecule from the N-terminus. Low activity on small molecule substrates of both trypsin and chymotrypsin.. In terms of biological role, this enzyme is a serine protease capable of degrading the native triple helix of collagen. This Chionoecetes opilio (Atlantic snow crab) protein is Collagenolytic protease 35 kDa 2.